The chain runs to 681 residues: Chaperone protein HtpG (681 aa).

An a; substrate-binding region spans residues M1 to R326. Positions S327 to N545 are b. The tract at residues I546–I681 is c. Residues D601–K620 form a disordered region.

It belongs to the heat shock protein 90 family. As to quaternary structure, homodimer.

It localises to the cytoplasm. Molecular chaperone. Has ATPase activity. The sequence is that of Chaperone protein HtpG from Bacteroides fragilis (strain ATCC 25285 / DSM 2151 / CCUG 4856 / JCM 11019 / LMG 10263 / NCTC 9343 / Onslow / VPI 2553 / EN-2).